A 322-amino-acid polypeptide reads, in one-letter code: Quinolinate synthase (322 aa).

Residues H37 and S54 each contribute to the iminosuccinate site. Residue C99 participates in [4Fe-4S] cluster binding. Residues 125-127 and S142 each bind iminosuccinate; that span reads YIN. [4Fe-4S] cluster is bound at residue C185. Residues 211-213 and T228 contribute to the iminosuccinate site; that span reads HPE. Residue C278 coordinates [4Fe-4S] cluster.

It belongs to the quinolinate synthase family. Type 2 subfamily. It depends on [4Fe-4S] cluster as a cofactor.

Its subcellular location is the cytoplasm. It carries out the reaction iminosuccinate + dihydroxyacetone phosphate = quinolinate + phosphate + 2 H2O + H(+). It functions in the pathway cofactor biosynthesis; NAD(+) biosynthesis; quinolinate from iminoaspartate: step 1/1. Its function is as follows. Catalyzes the condensation of iminoaspartate with dihydroxyacetone phosphate to form quinolinate. This chain is Quinolinate synthase, found in Chlorobaculum parvum (strain DSM 263 / NCIMB 8327) (Chlorobium vibrioforme subsp. thiosulfatophilum).